The chain runs to 351 residues: MSKKTSLTPEEMRREALNTALSTIERKYGSGSVMKLSDDAHTNVAVIPSGSIGLDLALGVGGIPRGRVTEIYGPESSGKTTLALHMIAECQKQGGTAAFIDAEHALDINYARRLGVKTDEMLISQPDYGEQALDIADMLVRSNAVDVVVIDSVAALIPQSELEGNMGETQVGSQARLMSHAMRKLTGTIHKSRTSVIFINQIRMKIGTMGYGSPETTTGGNALKFYCSVRIDVRKIQTLKDKEEVYGNRVRVKIVKNKVAPPFREAQFDILYGQGVSRTGELIDLGVETGIVEKSGAWYAFGSERLGQGKENVRQMLQENTTLREAIEQKLLEHLGMREPVQSADEAEKQD.

73-80 lines the ATP pocket; the sequence is GPESSGKT.

It belongs to the RecA family.

The protein resides in the cytoplasm. Its function is as follows. Can catalyze the hydrolysis of ATP in the presence of single-stranded DNA, the ATP-dependent uptake of single-stranded DNA by duplex DNA, and the ATP-dependent hybridization of homologous single-stranded DNAs. It interacts with LexA causing its activation and leading to its autocatalytic cleavage. The chain is Protein RecA from Oleidesulfovibrio alaskensis (strain ATCC BAA-1058 / DSM 17464 / G20) (Desulfovibrio alaskensis).